We begin with the raw amino-acid sequence, 617 residues long: AUGMIN subunit 3 (617 aa).

3 coiled-coil regions span residues 107-140 (DATL…SSAL), 314-334 (LHSL…LYQK), and 481-504 (AIIQ…ENSL).

This sequence belongs to the HAUS3 family. In terms of assembly, part of the augmin complex composed of 8 subunits. The complex acts on microtubules and interacts with gamma-tubulin in spindles and the phragmoplast. Interacts with AUG1.

The protein localises to the cytoplasm. It is found in the cytoskeleton. It localises to the spindle. Its subcellular location is the phragmoplast. In terms of biological role, involved in microtubules reorganization during spindle and phragmoplast development. Required for gamma-tubulin localization during mitosis. The sequence is that of AUGMIN subunit 3 from Arabidopsis thaliana (Mouse-ear cress).